The following is a 331-amino-acid chain: CRISPR-associated endonuclease Cas1 (331 aa).

Glu158, His223, and Asp238 together coordinate Mn(2+).

It belongs to the CRISPR-associated endonuclease Cas1 family. In terms of assembly, homodimer, forms a heterotetramer with a Cas2 homodimer. Requires Mg(2+) as cofactor. Mn(2+) serves as cofactor.

Functionally, CRISPR (clustered regularly interspaced short palindromic repeat), is an adaptive immune system that provides protection against mobile genetic elements (viruses, transposable elements and conjugative plasmids). CRISPR clusters contain spacers, sequences complementary to antecedent mobile elements, and target invading nucleic acids. CRISPR clusters are transcribed and processed into CRISPR RNA (crRNA). Acts as a dsDNA endonuclease. Involved in the integration of spacer DNA into the CRISPR cassette. Plasmid targeted by CRISPR locus P1 transform wild-type cells very poorly. This Haloferax volcanii (strain ATCC 29605 / DSM 3757 / JCM 8879 / NBRC 14742 / NCIMB 2012 / VKM B-1768 / DS2) (Halobacterium volcanii) protein is CRISPR-associated endonuclease Cas1.